A 171-amino-acid polypeptide reads, in one-letter code: tRNA-specific adenosine deaminase (171 aa).

Positions 6-133 constitute a CMP/dCMP-type deaminase domain; the sequence is EEQTYFMQEA…ERLNHRVQVE (128 aa). Position 57 (His57) interacts with Zn(2+). The active-site Proton donor is the Glu59. Residues Cys87 and Cys90 each coordinate Zn(2+).

It belongs to the cytidine and deoxycytidylate deaminase family. In terms of assembly, homodimer. The cofactor is Zn(2+).

It carries out the reaction adenosine(34) in tRNA + H2O + H(+) = inosine(34) in tRNA + NH4(+). In terms of biological role, catalyzes the deamination of adenosine to inosine at the wobble position 34 of tRNA(Arg2). This is tRNA-specific adenosine deaminase from Streptococcus pyogenes serotype M1.